A 454-amino-acid polypeptide reads, in one-letter code: Tryptophanase (454 aa).

Lys-256 bears the N6-(pyridoxal phosphate)lysine mark.

It belongs to the beta-eliminating lyase family. As to quaternary structure, homotetramer. Requires pyridoxal 5'-phosphate as cofactor.

The catalysed reaction is L-tryptophan + H2O = indole + pyruvate + NH4(+). It participates in amino-acid degradation; L-tryptophan degradation via pyruvate pathway; indole and pyruvate from L-tryptophan: step 1/1. In Hyphomonas neptunium (strain ATCC 15444), this protein is Tryptophanase.